A 914-amino-acid chain; its full sequence is Protein ECT2 (914 aa).

A2 carries the N-acetylalanine modification. 2 BRCT domains span residues 171–260 (LYCT…AAVD) and 266–354 (FKVP…MYLY). The residue at position 359 (T359) is a Phosphothreonine; by PKC/PRKCI. S367 and S370 each carry phosphoserine. A Phosphothreonine; by CDK1 modification is found at T373. At S376 the chain carries Phosphoserine. Short sequence motifs (nuclear localization signal) lie at residues 378–382 (RKRRR) and 401–405 (PRKRP). The segment at 388-449 (AQLSRETDVS…SKSSTPVPSK (62 aa)) is disordered. The span at 418-429 (DISNTPESSINY) shows a compositional bias: polar residues. Residues 432–449 (TPKSCTKSSKSSTPVPSK) show a composition bias toward low complexity. T444 carries the phosphothreonine; by CDK1 modification. One can recognise a DH domain in the interval 452-641 (ARWQVAKELY…KEVMTHINED (190 aa)). K611 participates in a covalent cross-link: Glycyl lysine isopeptide (Lys-Gly) (interchain with G-Cter in SUMO2). The 120-residue stretch at 675–794 (RVETISLGEH…KMLCRHVANT (120 aa)) folds into the PH domain. Phosphoserine occurs at positions 716 and 842. T846 is modified (phosphothreonine; by CDK1). Residues 857 to 884 (TSHGSVEGRSPSSNDKHVMSRLSSTSSL) are disordered. Residues S861 and S866 each carry the phosphoserine modification.

As to quaternary structure, homodimer. Homooligomer. Found in the centralspindlin complex. Interacts with NR1I3. Interacts (Thr-359 phosphorylated form) with PARD6A; the interaction is observed in cancer cells. Interacts (Thr-359 phosphorylated form) with PRKCI; the interaction is observed in cancer cells. Interacts with PKP4; the interaction is observed at the midbody. Interacts with RACGAP1/CYK4; the interaction is direct, occurs in a microtubule-dependent manner, occurs at anaphase and during cytokinesis, is inhibited in metaphase by phosphorylation of ECT2 on Thr-373 and is stimulated in early anaphase by dephosphorylation of ECT2 probably on Thr-373 through CDK1 activity. Interacts with PLK1; the interaction is stimulated upon its phosphorylation on Thr-444. Interacts with RHOA; the interaction results in allosteric activation of ECT2. Interacts with KIF23, PARD3, PARD6B and PRKCQ. Interacts with NEDD9/HEF1. Post-translationally, phosphorylated by PLK1 in vitro. Hyperphosphorylated during the G2 phase of the cell cycle. Phosphorylation at Thr-373 occurs during the G2/M phase, relieves its auto-inhibition status and stimulates its GEF activity. Phosphorylation at Thr-444 in G2/M phase is required for subsequent binding with PLK1 and Rho exchange activation. Dephosphorylated at the time of cytokinesis. Phosphorylation at Thr-359 is required for its transformation activity in cancer cells. As to expression, expressed in lung epithelial cells (at protein level). Expressed in squamous cell carcinoma, primary non-small cell lung cancer tumors and lung adenocarcinoma.

The protein resides in the nucleus. It localises to the cytoplasm. Its subcellular location is the cytoskeleton. It is found in the spindle. The protein localises to the cleavage furrow. The protein resides in the midbody. It localises to the cell junction. Its subcellular location is the tight junction. It is found in the microtubule organizing center. The protein localises to the centrosome. Its activity is regulated as follows. Autoinhibited by the C-terminal PH domain which folds back and binds to the surface of the DH domain, blocking binding of RHOA to the catalytic center of the DH domain. The 2nd BRCT domain is also involved in inhibition, probably by helping to impede RHOA binding. Allosterically activated by binding of activated GTP-bound RHOA to the PH domain which stimulates the release of PH inhibition and promotes the binding of substrate RHOA to the catalytic center. Binding of phosphorylated RACGAP1 to the N-terminal BRCT domain-containing region also releases autoinhibition. Its function is as follows. Guanine nucleotide exchange factor (GEF) that catalyzes the exchange of GDP for GTP. Promotes guanine nucleotide exchange on the Rho family members of small GTPases, like RHOA, RHOC, RAC1 and CDC42. Required for signal transduction pathways involved in the regulation of cytokinesis. Component of the centralspindlin complex that serves as a microtubule-dependent and Rho-mediated signaling required for the myosin contractile ring formation during the cell cycle cytokinesis. Regulates the translocation of RHOA from the central spindle to the equatorial region. Plays a role in the control of mitotic spindle assembly; regulates the activation of CDC42 in metaphase for the process of spindle fibers attachment to kinetochores before chromosome congression. Involved in the regulation of epithelial cell polarity; participates in the formation of epithelial tight junctions in a polarity complex PARD3-PARD6-protein kinase PRKCQ-dependent manner. Plays a role in the regulation of neurite outgrowth. Inhibits phenobarbital (PB)-induced NR1I3 nuclear translocation. Stimulates the activity of RAC1 through its association with the oncogenic PARD6A-PRKCI complex in cancer cells, thereby acting to coordinately drive tumor cell proliferation and invasion. Also stimulates genotoxic stress-induced RHOB activity in breast cancer cells leading to their cell death. The sequence is that of Protein ECT2 from Homo sapiens (Human).